The following is a 185-amino-acid chain: Ribosome-recycling factor (185 aa).

It belongs to the RRF family.

It localises to the cytoplasm. In terms of biological role, responsible for the release of ribosomes from messenger RNA at the termination of protein biosynthesis. May increase the efficiency of translation by recycling ribosomes from one round of translation to another. The chain is Ribosome-recycling factor from Neisseria meningitidis serogroup A / serotype 4A (strain DSM 15465 / Z2491).